A 308-amino-acid chain; its full sequence is Elongation factor Ts (308 aa).

Residues Thr-80 to Val-83 form an involved in Mg(2+) ion dislocation from EF-Tu region.

It belongs to the EF-Ts family.

The protein resides in the cytoplasm. Functionally, associates with the EF-Tu.GDP complex and induces the exchange of GDP to GTP. It remains bound to the aminoacyl-tRNA.EF-Tu.GTP complex up to the GTP hydrolysis stage on the ribosome. The polypeptide is Elongation factor Ts (Rhizobium rhizogenes (strain K84 / ATCC BAA-868) (Agrobacterium radiobacter)).